Consider the following 239-residue polypeptide: Octanoyltransferase (239 aa).

In terms of domain architecture, BPL/LPL catalytic spans 48-236 (EGGDELVWLV…AFETVFGETV (189 aa)). Residues 87–94 (RGGEYTYH), 167–169 (ALG), and 180–182 (GLS) contribute to the substrate site. The active-site Acyl-thioester intermediate is the Cys-198.

This sequence belongs to the LipB family.

The protein localises to the cytoplasm. It carries out the reaction octanoyl-[ACP] + L-lysyl-[protein] = N(6)-octanoyl-L-lysyl-[protein] + holo-[ACP] + H(+). It functions in the pathway protein modification; protein lipoylation via endogenous pathway; protein N(6)-(lipoyl)lysine from octanoyl-[acyl-carrier-protein]: step 1/2. In terms of biological role, catalyzes the transfer of endogenously produced octanoic acid from octanoyl-acyl-carrier-protein onto the lipoyl domains of lipoate-dependent enzymes. Lipoyl-ACP can also act as a substrate although octanoyl-ACP is likely to be the physiological substrate. This is Octanoyltransferase from Rhizobium etli (strain CIAT 652).